The following is a 356-amino-acid chain: MAKSKKIVFTGGGTVGHVTLNLILIPKFLKDGWEVHYIGDKHGIEHEQIDKSGLDVTFHSIATGKLRRYFSWQNMLDVFKVGWGILQSIAIIAKIRPQALFSKGGFVSVPPVIASKLLRVPVYVHESDLSMGLANKIAYKFATTMFTTFEQSKTLVKTRHVGAITKVGMTRFDNSDQLDKIKEQFDEKLKTVLFIGGSTGAKVFNDFISKTPELIENYNIINISGDSSLNTLERHLYRVDYVTDLYQPLMDMADLVVTRGGSNTIFELLAMKKLHLIVPLGKEASRGDQLENADYFERKGYARQLQEPELSWETLKHELEQLVEHAETYKEAMAKSEEITSPDDFYNLLVTSISNK.

The UDP-N-acetyl-alpha-D-glucosamine site is built by serine 198 and glutamine 289.

Belongs to the glycosyltransferase 28 family. MurG subfamily.

It localises to the cell membrane. It carries out the reaction Mur2Ac(oyl-L-Ala-gamma-D-Glu-L-Lys-D-Ala-D-Ala)-di-trans,octa-cis-undecaprenyl diphosphate + UDP-N-acetyl-alpha-D-glucosamine = beta-D-GlcNAc-(1-&gt;4)-Mur2Ac(oyl-L-Ala-gamma-D-Glu-L-Lys-D-Ala-D-Ala)-di-trans,octa-cis-undecaprenyl diphosphate + UDP + H(+). It functions in the pathway cell wall biogenesis; peptidoglycan biosynthesis. In terms of biological role, cell wall formation. Catalyzes the transfer of a GlcNAc subunit on undecaprenyl-pyrophosphoryl-MurNAc-pentapeptide (lipid intermediate I) to form undecaprenyl-pyrophosphoryl-MurNAc-(pentapeptide)GlcNAc (lipid intermediate II). In Streptococcus thermophilus (strain ATCC BAA-491 / LMD-9), this protein is UDP-N-acetylglucosamine--N-acetylmuramyl-(pentapeptide) pyrophosphoryl-undecaprenol N-acetylglucosamine transferase.